We begin with the raw amino-acid sequence, 107 residues long: MVVHIENLNAFSAALKNAGDKLVVVDFTATWCGPCQKIGPIFETLSKSEDYQNVVFLKVDVDDAADVSSHCDIKCMPTFHFYKNGQKIDEFSGANEQTLKQKINDHK.

Residues 2-107 (VVHIENLNAF…TLKQKINDHK (106 aa)) enclose the Thioredoxin domain. Active-site nucleophile residues include cysteine 32 and cysteine 35. Cysteine 32 and cysteine 35 are disulfide-bonded. S-nitrosocysteine occurs at positions 71 and 75.

Belongs to the thioredoxin family. Post-translationally, may be nitrosylated on several cysteine residues, depending on the oxidation state. Nitrosylated Cys-75 may serve as donor for nitrosylation of target proteins.

It localises to the nucleus. It is found in the cytoplasm. Its subcellular location is the secreted. Participates in various redox reactions through the reversible oxidation of its active center dithiol to a disulfide and catalyzes dithiol-disulfide exchange reactions. Plays a role in the reversible S-nitrosylation of cysteine residues in target proteins, and thereby contributes to the response to intracellular nitric oxide. Nitrosylates the active site Cys of CASP3 in response to nitric oxide (NO), and thereby inhibits caspase-3 activity. Induces the FOS/JUN AP-1 DNA binding activity in ionizing radiation (IR) cells through its oxidation/reduction status and stimulates AP-1 transcriptional activity. This chain is Thioredoxin (txn), found in Ictalurus punctatus (Channel catfish).